Here is a 286-residue protein sequence, read N- to C-terminus: MSLDAIKRKISSVQTTAKITNAMKLVATAKLKRQRDRLAAIKEYCHDYYDVIGLLLSVVNDIEFLKIPNAKNRTLYITINSTMGLAGSYNYNVNKLVSKIINEDDITFTIGKKGHDFMRLSNRLHQVNTYLNLNDNDLTFDMSLQIAREALELYSNGEVNKICIIYTKFINAITFEVNNIDVLPFDKTVLTKDNLAETIELAKDNIIFQPNKVELVKKILPTYIATVLYGSLIESKISENASRRNAMDAATKNAKALAEDYKLIYNTLRQGKITREITEIVAGSDD.

This sequence belongs to the ATPase gamma chain family. As to quaternary structure, F-type ATPases have 2 components, CF(1) - the catalytic core - and CF(0) - the membrane proton channel. CF(1) has five subunits: alpha(3), beta(3), gamma(1), delta(1), epsilon(1). CF(0) has three main subunits: a, b and c.

It localises to the cell membrane. Functionally, produces ATP from ADP in the presence of a proton gradient across the membrane. The gamma chain is believed to be important in regulating ATPase activity and the flow of protons through the CF(0) complex. In Ureaplasma urealyticum serovar 10 (strain ATCC 33699 / Western), this protein is ATP synthase gamma chain.